Here is a 503-residue protein sequence, read N- to C-terminus: Dihydropyrimidinase (503 aa).

Zn(2+) contacts are provided by His-66, His-68, and Lys-158. An N6-carboxylysine modification is found at Lys-158. Residue Tyr-163 coordinates substrate. 3 residues coordinate Zn(2+): His-191, His-247, and Asp-325. Asn-346 contributes to the substrate binding site.

This sequence belongs to the metallo-dependent hydrolases superfamily. Hydantoinase/dihydropyrimidinase family. In terms of assembly, homotetramer. The cofactor is Zn(2+). Carboxylation allows a single lysine to coordinate two zinc ions.

It catalyses the reaction 5,6-dihydrouracil + H2O = 3-(carbamoylamino)propanoate + H(+). In terms of biological role, catalyzes the second step of the reductive pyrimidine degradation, the reversible hydrolytic ring opening of dihydropyrimidines. Can catalyze the ring opening of 5,6-dihydrouracil to N-carbamyl-alanine and of 5,6-dihydrothymine to N-carbamyl-amino isobutyrate. This is Dihydropyrimidinase (pyd2) from Dictyostelium discoideum (Social amoeba).